We begin with the raw amino-acid sequence, 201 residues long: Dephospho-CoA kinase (201 aa).

A DPCK domain is found at 7-201 (AIALSGGIGT…IETIKKDFHV (195 aa)). 15 to 20 (GTGKST) is an ATP binding site.

The protein belongs to the CoaE family.

It is found in the cytoplasm. It catalyses the reaction 3'-dephospho-CoA + ATP = ADP + CoA + H(+). It participates in cofactor biosynthesis; coenzyme A biosynthesis; CoA from (R)-pantothenate: step 5/5. Catalyzes the phosphorylation of the 3'-hydroxyl group of dephosphocoenzyme A to form coenzyme A. In Wolinella succinogenes (strain ATCC 29543 / DSM 1740 / CCUG 13145 / JCM 31913 / LMG 7466 / NCTC 11488 / FDC 602W) (Vibrio succinogenes), this protein is Dephospho-CoA kinase.